Reading from the N-terminus, the 177-residue chain is MGIYDFQMKDAEGNAVDLSGYRGKVLLIVNTATRCGLTPQYEALQKLYAQYTAEGLEILDFPCNQFREQAPESSGEIAQVCMMKFGTKFKIFDKIEVNGANTAPLYAYLKSVKPQDKGNHLFKDFVLKLAALGEKRDEGDIKWNFTKFLVNRDGEVVERFAPSVTPEEIEADIRALL.

Cysteine 35 is an active-site residue.

Belongs to the glutathione peroxidase family.

Its function is as follows. Important in the cellular metabolism or defense processes particular to this pathogen. This is Glutathione peroxidase homolog (gpxA) from Neisseria meningitidis serogroup A / serotype 4A (strain DSM 15465 / Z2491).